Here is a 191-residue protein sequence, read N- to C-terminus: Akirin-1 (191 aa).

Residues 17 to 70 (LLSPGSPKRRRCAPLPGPTPGLRPPDAEPPPLQMQTPPASLQQPAPPGSERRLP) are disordered. At Ser-22 the chain carries Phosphoserine. Positions 23 to 28 (PKRRRC) match the Nuclear localization signal motif. A compositionally biased stretch (pro residues) spans 31 to 48 (LPGPTPGLRPPDAEPPPL). Over residues 49–59 (QMQTPPASLQQ) the composition is skewed to polar residues. Thr-71 bears the Phosphothreonine mark. Positions 188–191 (SYVS) match the SYVS motif motif.

This sequence belongs to the akirin family. Expressed in macrophages and satellite cells.

It localises to the nucleus. Its function is as follows. Molecular adapter that acts as a bridge between proteins, and which is involved skeletal muscle development. Functions as a signal transducer for MSTN during skeletal muscle regeneration and myogenesis. May regulate chemotaxis of both macrophages and myoblasts by reorganising actin cytoskeleton, leading to more efficient lamellipodia formation via a PI3 kinase dependent pathway. In contrast to AKIRIN2, not involved in nuclear import of proteasomes. The chain is Akirin-1 from Mus musculus (Mouse).